The chain runs to 290 residues: uncharacterized protein (290 aa).

Disordered regions lie at residues 17-91 (QTIS…EKNS) and 220-259 (DKASEPINGEEKEEGEKDGNAEQGKQKEVQDEQEEVQMPN). Positions 40–50 (NITTHLSTGNL) are enriched in polar residues. Over residues 66–83 (STKKGKRVSKPGTKKKEK) the composition is skewed to basic residues. A compositionally biased stretch (basic and acidic residues) spans 233 to 249 (EGEKDGNAEQGKQKEVQ).

This is an uncharacterized protein from Saccharomyces cerevisiae (strain ATCC 204508 / S288c) (Baker's yeast).